The sequence spans 381 residues: Erythronate-4-phosphate dehydrogenase (381 aa).

2 residues coordinate substrate: S45 and T67. NAD(+)-binding positions include D148, 207 to 209 (ASR), and D233. The active site involves R209. Residue E238 is part of the active site. The active-site Proton donor is the H255. G258 contributes to the NAD(+) binding site.

The protein belongs to the D-isomer specific 2-hydroxyacid dehydrogenase family. PdxB subfamily. As to quaternary structure, homodimer.

The protein localises to the cytoplasm. It carries out the reaction 4-phospho-D-erythronate + NAD(+) = (R)-3-hydroxy-2-oxo-4-phosphooxybutanoate + NADH + H(+). The protein operates within cofactor biosynthesis; pyridoxine 5'-phosphate biosynthesis; pyridoxine 5'-phosphate from D-erythrose 4-phosphate: step 2/5. Functionally, catalyzes the oxidation of erythronate-4-phosphate to 3-hydroxy-2-oxo-4-phosphonooxybutanoate. The chain is Erythronate-4-phosphate dehydrogenase from Idiomarina loihiensis (strain ATCC BAA-735 / DSM 15497 / L2-TR).